Reading from the N-terminus, the 519-residue chain is GATA zinc finger domain-containing protein 8 (519 aa).

Disordered stretches follow at residues 25–182 (YSTG…SSSG), 198–249 (SNIN…SNNT), 273–359 (SNNM…NNKQ), and 431–453 (DERQ…KRRE). Residues 37 to 156 (TNNSQNKTNN…SSSITSPSSN (120 aa)) are compositionally biased toward low complexity. Polar residues predominate over residues 172–182 (SPNNKQVSSSG). Over residues 273-357 (SNNMNINNQH…SNINNNNNNN (85 aa)) the composition is skewed to low complexity. A coiled-coil region spans residues 429–461 (KTDERQQKKRMESDKNAEKREKRREASRLLNNV). The GATA-type zinc-finger motif lies at 462–487 (CRNCKTTETPEWRKGPDGTKSLCNAC).

In Dictyostelium discoideum (Social amoeba), this protein is GATA zinc finger domain-containing protein 8 (gtaH).